Here is a 193-residue protein sequence, read N- to C-terminus: uncharacterized protein (193 aa).

A disordered region spans residues 1–84; that stretch reads MTSKCSKWHE…RRSNQRIQLY (84 aa). Residues 43 to 78 are compositionally biased toward basic residues; that stretch reads SSPRRSSPRRSPRRSSPRRSSPRRSSPRRSSPRRSN.

Belongs to the IIV-6 378R family.

This is an uncharacterized protein from Invertebrate iridescent virus 6 (IIV-6).